The sequence spans 74 residues: Antitoxin VapB39 (74 aa).

Its function is as follows. Antitoxin component of a type II toxin-antitoxin (TA) system. This Mycobacterium tuberculosis (strain CDC 1551 / Oshkosh) protein is Antitoxin VapB39 (vapB39).